Here is an 89-residue protein sequence, read N- to C-terminus: Small ribosomal subunit protein uS15 (89 aa).

The protein belongs to the universal ribosomal protein uS15 family. As to quaternary structure, part of the 30S ribosomal subunit. Forms a bridge to the 50S subunit in the 70S ribosome, contacting the 23S rRNA.

Its function is as follows. One of the primary rRNA binding proteins, it binds directly to 16S rRNA where it helps nucleate assembly of the platform of the 30S subunit by binding and bridging several RNA helices of the 16S rRNA. Forms an intersubunit bridge (bridge B4) with the 23S rRNA of the 50S subunit in the ribosome. This is Small ribosomal subunit protein uS15 from Vibrio atlanticus (strain LGP32) (Vibrio splendidus (strain Mel32)).